The primary structure comprises 183 residues: Phosphopantetheine adenylyltransferase (183 aa).

Thr13 contacts substrate. ATP contacts are provided by residues 13-14 (TF) and His21. Substrate contacts are provided by Lys45, Leu81, and Arg95. ATP contacts are provided by residues 96–98 (GLR), Glu106, and 131–137 (HQFISSR).

Belongs to the bacterial CoaD family. As to quaternary structure, homohexamer. Requires Mg(2+) as cofactor.

The protein resides in the cytoplasm. The catalysed reaction is (R)-4'-phosphopantetheine + ATP + H(+) = 3'-dephospho-CoA + diphosphate. It functions in the pathway cofactor biosynthesis; coenzyme A biosynthesis; CoA from (R)-pantothenate: step 4/5. Functionally, reversibly transfers an adenylyl group from ATP to 4'-phosphopantetheine, yielding dephospho-CoA (dPCoA) and pyrophosphate. This is Phosphopantetheine adenylyltransferase from Rhodospirillum centenum (strain ATCC 51521 / SW).